The following is a 536-amino-acid chain: uncharacterized protein (536 aa).

The SWIM-type zinc finger occupies 71–98 (LFVIVKSGCSCPSGRICRHMLAVFLYVY). A coiled-coil region spans residues 482–528 (YKEAARYLKKLRTLYKKAKKQKVWERYIQLLSSHYKRLRALQEELQK).

This is an uncharacterized protein from Bacillus subtilis (strain 168).